A 205-amino-acid chain; its full sequence is Probable calcium-binding protein CML41 (205 aa).

The disordered stretch occupies residues 26–55; the sequence is SFQNRRRSPKSNSSSTLNSPRSNSDDNNNI. Low complexity predominate over residues 35–54; it reads KSNSSSTLNSPRSNSDDNNN. EF-hand domains are found at residues 60-95, 96-131, 137-173, and 174-205; these read ASKEELRQVFSHFDSDGDGKISAFELRHYFGSVGEY, ISHEAAQEAINEVDTDADGSLGFEDFVGLMTRRDLY, DGDGELKTAFEMFEVEKGSGCITPKGLQKMLVKLGES, and RTYGECEAMIKFYDIDGNGILDFHEFRQMMTV. Residues Asp73, Asp75, Asp77, Lys79, Glu84, Asp109, Asp111, Asp113, Ser115, and Asp120 each contribute to the Ca(2+) site. Ca(2+) contacts are provided by Asp187, Asp189, Asn191, and Glu198.

Potential calcium sensor. This chain is Probable calcium-binding protein CML41 (CML41), found in Arabidopsis thaliana (Mouse-ear cress).